The chain runs to 226 residues: Ribonuclease 3 (226 aa).

One can recognise an RNase III domain in the interval 7–129; sequence LPRLCRTLGY…IIGAVYLDSD (123 aa). A Mg(2+)-binding site is contributed by E42. D46 is an active-site residue. Mg(2+) is bound by residues D115 and E118. E118 is an active-site residue. One can recognise a DRBM domain in the interval 156–226; the sequence is DAKTLLQEHL…AAQVLELLKK (71 aa).

It belongs to the ribonuclease III family. As to quaternary structure, homodimer. The cofactor is Mg(2+).

The protein resides in the cytoplasm. The enzyme catalyses Endonucleolytic cleavage to 5'-phosphomonoester.. In terms of biological role, digests double-stranded RNA. Involved in the processing of primary rRNA transcript to yield the immediate precursors to the large and small rRNAs (23S and 16S). Processes some mRNAs, and tRNAs when they are encoded in the rRNA operon. Processes pre-crRNA and tracrRNA of type II CRISPR loci if present in the organism. This Shewanella baltica (strain OS185) protein is Ribonuclease 3.